Consider the following 258-residue polypeptide: Tritrans,polycis-undecaprenyl-diphosphate synthase (geranylgeranyl-diphosphate specific) (258 aa).

The active site involves Asp37. Asp37 contributes to the Mg(2+) binding site. Residues 38–41, His54, and 82–84 contribute to the substrate site; these read GNRR and STE. Asn85 (proton acceptor) is an active-site residue. Residues Phe86, Arg88, Arg207, and 213–215 contribute to the substrate site; that span reads RIS. Residue Glu226 coordinates Mg(2+).

Belongs to the UPP synthase family. As to quaternary structure, homodimer. It depends on Mg(2+) as a cofactor.

It carries out the reaction geranylgeranyl diphosphate + 7 isopentenyl diphosphate = tri-trans,hepta-cis-undecaprenyl diphosphate + 7 diphosphate. Functionally, catalyzes the sequential condensation of isopentenyl diphosphate (IPP) with geranylgeranyl diphosphate (GGPP) to yield (2Z,6Z,10Z,14Z,18Z,22Z,26Z,30E,34E,38E)-undecaprenyl diphosphate (tritrans,heptacis-UPP). It is probably the precursor of glycosyl carrier lipids. The chain is Tritrans,polycis-undecaprenyl-diphosphate synthase (geranylgeranyl-diphosphate specific) from Thermoplasma acidophilum (strain ATCC 25905 / DSM 1728 / JCM 9062 / NBRC 15155 / AMRC-C165).